The chain runs to 244 residues: NAD(P)H-quinone oxidoreductase subunit K (244 aa).

[4Fe-4S] cluster is bound by residues cysteine 60, cysteine 61, cysteine 125, and cysteine 156.

Belongs to the complex I 20 kDa subunit family. As to quaternary structure, NDH-1 can be composed of about 15 different subunits; different subcomplexes with different compositions have been identified which probably have different functions. It depends on [4Fe-4S] cluster as a cofactor.

It is found in the cellular thylakoid membrane. It carries out the reaction a plastoquinone + NADH + (n+1) H(+)(in) = a plastoquinol + NAD(+) + n H(+)(out). It catalyses the reaction a plastoquinone + NADPH + (n+1) H(+)(in) = a plastoquinol + NADP(+) + n H(+)(out). NDH-1 shuttles electrons from an unknown electron donor, via FMN and iron-sulfur (Fe-S) centers, to quinones in the respiratory and/or the photosynthetic chain. The immediate electron acceptor for the enzyme in this species is believed to be plastoquinone. Couples the redox reaction to proton translocation, and thus conserves the redox energy in a proton gradient. Cyanobacterial NDH-1 also plays a role in inorganic carbon-concentration. The polypeptide is NAD(P)H-quinone oxidoreductase subunit K (Prochlorococcus marinus (strain MIT 9515)).